The following is a 654-amino-acid chain: Pyoverdine export ATP-binding/permease protein PvdT (654 aa).

One can recognise an ABC transporter domain in the interval 6 to 245 (IELCDIRKAY…AHKGIQAEEL (240 aa)). 43–50 (GASGSGKS) serves as a coordination point for ATP. The next 4 helical transmembrane spans lie at 282–302 (ALTL…LAVG), 529–549 (LSLM…IGVM), 584–604 (AIML…VVGA), and 614–634 (AFAL…GVVF).

Belongs to the ABC transporter superfamily. Macrolide exporter (TC 3.A.1.122) family. In terms of assembly, part of the tripartite efflux system PvdRT-OpmQ, which is composed of an inner membrane component with both ATPase and permease domains, PvdT, a periplasmic membrane fusion protein, PvdR, and an outer membrane component, OpmQ.

The protein resides in the cell inner membrane. Its activity is regulated as follows. Has a basal ATPase activity that is stimulated by PvdR. In vitro, interaction with PVD influences the affinity of PvdT to PvdR. Part of the tripartite efflux system PvdRT-OpmQ required for the secretion into the extracellular milieu of the siderophore pyoverdine (PVD), which is involved in iron acquisition. This subunit binds PVD and drives its secretion by hydrolyzing ATP. The system is responsible for export of newly synthesized PVD after the final steps of biosynthesis have taken place in the periplasm. It is also responsible for recycling of PVD after internalization of ferri-PVD into the periplasm by the outer-membrane receptor FpvA and release of iron from PVD, thus making PVD available for new cycles of iron uptake. Contributes to resistance against ampicillin. This Pseudomonas putida (strain ATCC 47054 / DSM 6125 / CFBP 8728 / NCIMB 11950 / KT2440) protein is Pyoverdine export ATP-binding/permease protein PvdT.